We begin with the raw amino-acid sequence, 396 residues long: Probable intron-encoded endonuclease aI3 (396 aa).

Positions 51–90 (TNNTNNNNPADSSSYESRMRAAGNSNSNSNSNSDSNINNT) are disordered. Residues 74-90 (NSNSNSNSNSDSNINNT) show a composition bias toward low complexity.

The protein belongs to the LAGLIDADG endonuclease family.

The protein resides in the mitochondrion. Mitochondrial DNA endonuclease involved in intron homing. This is Probable intron-encoded endonuclease aI3 (aI3) from Kluyveromyces lactis (strain ATCC 8585 / CBS 2359 / DSM 70799 / NBRC 1267 / NRRL Y-1140 / WM37) (Yeast).